A 63-amino-acid chain; its full sequence is MGRNHIHKNRDKNKQKLPQVPDALKRETDGVYEEYSTELADADDREAQERAKAADNRAKKKSR.

The span at 1-15 (MGRNHIHKNRDKNKQ) shows a compositional bias: basic residues. Positions 1-63 (MGRNHIHKNR…ADNRAKKKSR (63 aa)) are disordered. Residues 30–44 (GVYEEYSTELADADD) are compositionally biased toward acidic residues. Positions 45 to 57 (REAQERAKAADNR) are enriched in basic and acidic residues.

This is an uncharacterized protein from Bacillus subtilis (strain 168).